A 144-amino-acid chain; its full sequence is Large ribosomal subunit protein uL15 (144 aa).

Residues 1–57 (MKLNDLSPAPGSRREKHRPGRGIGSGLGKTGGRGHKGQSSRSGGTIAPGFEGGQQPL) form a disordered region. The span at 21 to 31 (RGIGSGLGKTG) shows a compositional bias: gly residues.

The protein belongs to the universal ribosomal protein uL15 family. In terms of assembly, part of the 50S ribosomal subunit.

Functionally, binds to the 23S rRNA. The polypeptide is Large ribosomal subunit protein uL15 (Pseudomonas savastanoi pv. phaseolicola (strain 1448A / Race 6) (Pseudomonas syringae pv. phaseolicola (strain 1448A / Race 6))).